The following is a 360-amino-acid chain: GDSL esterase/lipase At2g31540 (360 aa).

The signal sequence occupies residues 1–23 (MSTSKAITLTLFIATTLLAPCNA). The active-site Nucleophile is the serine 42. Residues asparagine 104 and asparagine 326 are each glycosylated (N-linked (GlcNAc...) asparagine). Residues aspartate 334 and histidine 337 contribute to the active site.

It belongs to the 'GDSL' lipolytic enzyme family.

Its subcellular location is the secreted. This is GDSL esterase/lipase At2g31540 from Arabidopsis thaliana (Mouse-ear cress).